We begin with the raw amino-acid sequence, 249 residues long: Isoprenyl transferase (249 aa).

The active site involves aspartate 25. Residue aspartate 25 participates in Mg(2+) binding. Substrate-binding positions include 26–29 (GNGR), tryptophan 30, arginine 38, histidine 42, and 70–72 (STE). The Proton acceptor role is filled by asparagine 73. Residues tryptophan 74, arginine 76, arginine 197, and 203–205 (RLS) contribute to the substrate site. Glutamate 216 provides a ligand contact to Mg(2+).

The protein belongs to the UPP synthase family. Homodimer. Mg(2+) is required as a cofactor.

Functionally, catalyzes the condensation of isopentenyl diphosphate (IPP) with allylic pyrophosphates generating different type of terpenoids. The protein is Isoprenyl transferase of Streptococcus thermophilus (strain CNRZ 1066).